Consider the following 461-residue polypeptide: MDQSNRYANLNLKESELIAGGRHVLCAYIMKPKAGFGNFIQTAAHFAAESSTGTNVEVSTTDDFTRGVDALVYEVDEANSLMKIAYPIELFDRNVIDGRAMIASFLTLTIGNNQGMGDVEYAKMYDFYVPPAYLKLFDGPSTTIKDLWRVLGRPVINGGFIVGTIIKPKLGLRPQPFANACYDFWLGGDFIKNDEPQGNQVFAPFKDTVRAVADAMRRAQDKTGEAKLFSFNITADDHYEMLARGEFILETFADNADHIAFLVDGYVAGPAAVTTARRAFPKQYLHYHRAGHGAVTSPQSKRGYTAFVLSKMARLQGASGIHTGTMGFGKMEGEAADRAIAYMITEDAADGPYFHQEWLGMNPTTPIISGGMNALRMPGFFDNLGHSNLIMTAGGGAFGHVDGGAAGAKSLRQAEQCWKQGADPVEFAKDHREFARAFESFPQDADKLYPNWRAKLKPQAA.

Asn112 is a binding site for substrate. Catalysis depends on Lys167, which acts as the Proton acceptor. Lys169 is a binding site for substrate. Lys192, Asp194, and Glu195 together coordinate Mg(2+). Lys192 bears the N6-carboxylysine mark. His288 serves as the catalytic Proton acceptor. Residues Arg289, His322, and Ser369 each contribute to the substrate site.

This sequence belongs to the RuBisCO large chain family. Type II subfamily. Homodimer. It depends on Mg(2+) as a cofactor.

It carries out the reaction 2 (2R)-3-phosphoglycerate + 2 H(+) = D-ribulose 1,5-bisphosphate + CO2 + H2O. The catalysed reaction is D-ribulose 1,5-bisphosphate + O2 = 2-phosphoglycolate + (2R)-3-phosphoglycerate + 2 H(+). In terms of biological role, ruBisCO catalyzes two reactions: the carboxylation of D-ribulose 1,5-bisphosphate, the primary event in carbon dioxide fixation, as well as the oxidative fragmentation of the pentose substrate. Both reactions occur simultaneously and in competition at the same active site. The sequence is that of Ribulose bisphosphate carboxylase from Rhodopseudomonas palustris (strain ATCC BAA-98 / CGA009).